A 72-amino-acid chain; its full sequence is Protein RALF-like 11 (72 aa).

The signal sequence occupies residues 1–17 (MKAWLICLLVICAAVIA). 2 disulfide bridges follow: Cys-34–Cys-43 and Cys-63–Cys-69.

The protein belongs to the plant rapid alkalinization factor (RALF) family.

The protein localises to the secreted. In terms of biological role, cell signaling peptide that may regulate plant stress, growth, and development. Mediates a rapid alkalinization of extracellular space by mediating a transient increase in the cytoplasmic Ca(2+) concentration leading to a calcium-dependent signaling events through a cell surface receptor and a concomitant activation of some intracellular mitogen-activated protein kinases. This is Protein RALF-like 11 (RALFL11) from Arabidopsis thaliana (Mouse-ear cress).